We begin with the raw amino-acid sequence, 391 residues long: MSILNMQDLELQGKRVLIREDLNVPVSDGVVTSDARLRASLPTIKLALEKGAAVMVMSHLGRPTEGEFNAEFSMQPVVNYLAKALDCPVRLASEYLDGVDVAVGEVVVFENVRFNVGEKKNDEALAKKMAALCDVYVMDAFGTAHRAQASTHGVGLHAPIACAGPLLAGELAALGKALDNPARPMVAIVGGSKVSTKLTVLESLSTKVDQLVVGGGIANTFVAAAGHNVGKSLYEADLIDEAKRLVAAAQSGGGDIPVPTDVVVAGEFSPTATATLKDVSAVSDTDMIFDIGPDSAEALAEIIKNAGTVVWNGPVGVFEFDQFGEGTKRIAQAIADSNAFSIAGGGDTLAAVDKYDIADKVSYISTGGGAFLEFLEGKELPAVAMLESRAQ.

Substrate is bound by residues 21-23 (DLN), arginine 36, 59-62 (HLGR), arginine 113, and arginine 146. ATP contacts are provided by residues lysine 197, glutamate 319, and 345 to 348 (GGDT).

The protein belongs to the phosphoglycerate kinase family. In terms of assembly, monomer.

It is found in the cytoplasm. The enzyme catalyses (2R)-3-phosphoglycerate + ATP = (2R)-3-phospho-glyceroyl phosphate + ADP. Its pathway is carbohydrate degradation; glycolysis; pyruvate from D-glyceraldehyde 3-phosphate: step 2/5. This is Phosphoglycerate kinase from Shewanella piezotolerans (strain WP3 / JCM 13877).